The sequence spans 211 residues: Endonuclease III (211 aa).

A HhH domain is found at 108 to 127 (RAALEALPGVGRKTANVVLN). 4 residues coordinate [4Fe-4S] cluster: Cys187, Cys194, Cys197, and Cys203.

The protein belongs to the Nth/MutY family. [4Fe-4S] cluster serves as cofactor.

It catalyses the reaction 2'-deoxyribonucleotide-(2'-deoxyribose 5'-phosphate)-2'-deoxyribonucleotide-DNA = a 3'-end 2'-deoxyribonucleotide-(2,3-dehydro-2,3-deoxyribose 5'-phosphate)-DNA + a 5'-end 5'-phospho-2'-deoxyribonucleoside-DNA + H(+). DNA repair enzyme that has both DNA N-glycosylase activity and AP-lyase activity. The DNA N-glycosylase activity releases various damaged pyrimidines from DNA by cleaving the N-glycosidic bond, leaving an AP (apurinic/apyrimidinic) site. The AP-lyase activity cleaves the phosphodiester bond 3' to the AP site by a beta-elimination, leaving a 3'-terminal unsaturated sugar and a product with a terminal 5'-phosphate. The polypeptide is Endonuclease III (Escherichia coli O6:H1 (strain CFT073 / ATCC 700928 / UPEC)).